A 367-amino-acid polypeptide reads, in one-letter code: Alanine racemase (367 aa).

The active-site Proton acceptor; specific for D-alanine is the Lys-34. The residue at position 34 (Lys-34) is an N6-(pyridoxal phosphate)lysine. Position 129 (Arg-129) interacts with substrate. The Proton acceptor; specific for L-alanine role is filled by Tyr-251. Met-299 is a binding site for substrate.

The protein belongs to the alanine racemase family. Pyridoxal 5'-phosphate serves as cofactor.

The enzyme catalyses L-alanine = D-alanine. It functions in the pathway amino-acid biosynthesis; D-alanine biosynthesis; D-alanine from L-alanine: step 1/1. In terms of biological role, catalyzes the interconversion of L-alanine and D-alanine. May also act on other amino acids. This chain is Alanine racemase (alr), found in Thiobacillus denitrificans (strain ATCC 25259 / T1).